The sequence spans 419 residues: Murein hydrolase activator EnvC (419 aa).

The N-terminal stretch at 1 to 34 (MTRAVKPRRFAIRPIIYASVLSAGVLLCAFSAHA) is a signal peptide. Coiled-coil stretches lie at residues 35-124 (DERD…LDAA) and 155-271 (LNQA…ATRK). Over residues 252 to 270 (EREAREAQAVRDRQKEATR) the composition is skewed to basic and acidic residues. The interval 252–290 (EREAREAQAVRDRQKEATRKGTTYKPTESEKSLMSRTGG) is disordered.

The protein belongs to the peptidase M23B family.

The protein localises to the periplasm. Its function is as follows. Activator of the cell wall hydrolases AmiA and AmiB. Required for septal murein cleavage and daughter cell separation during cell division. In vitro, exhibits weak endoproteolytic activity on beta-casein. The polypeptide is Murein hydrolase activator EnvC (envC) (Escherichia coli (strain K12)).